Reading from the N-terminus, the 448-residue chain is Adenylosuccinate synthetase (448 aa).

GTP contacts are provided by residues 36–42 (GDEGKGK) and 64–66 (GHT). D37 acts as the Proton acceptor in catalysis. Mg(2+) contacts are provided by D37 and G64. Residues 37-40 (DEGK), 62-65 (NAGH), T154, R168, N246, T261, and R325 each bind IMP. H65 functions as the Proton donor in the catalytic mechanism. Residue 321–327 (VTTKRKR) coordinates substrate. GTP contacts are provided by residues R327, 353–355 (KLD), and 436–438 (GVG).

It belongs to the adenylosuccinate synthetase family. In terms of assembly, homodimer. Requires Mg(2+) as cofactor.

The protein resides in the cytoplasm. It catalyses the reaction IMP + L-aspartate + GTP = N(6)-(1,2-dicarboxyethyl)-AMP + GDP + phosphate + 2 H(+). It functions in the pathway purine metabolism; AMP biosynthesis via de novo pathway; AMP from IMP: step 1/2. Its function is as follows. Plays an important role in the de novo pathway and in the salvage pathway of purine nucleotide biosynthesis. Catalyzes the first committed step in the biosynthesis of AMP from IMP. The polypeptide is Adenylosuccinate synthetase (Drosophila ananassae (Fruit fly)).